We begin with the raw amino-acid sequence, 325 residues long: MATH domain and coiled-coil domain-containing protein At3g58340 (325 aa).

Residues 6-131 enclose the MATH domain; it reads DKKFCWEIKN…NGQVMIVAEV (126 aa). Residues 266–315 are a coiled coil; sequence KVDWLEKKLDHVKEKKEKEQSGLIILQGIEQQLHELMHKCEKKKSEVLSV.

The chain is MATH domain and coiled-coil domain-containing protein At3g58340 from Arabidopsis thaliana (Mouse-ear cress).